The sequence spans 458 residues: MALWGGRFTQAADQRFKQFNDSLRFDYRLAEQDIVGSVAWSKALVTVGVLTADEQRQLEEALNVLLEEVRANPQQILQSDAEDIHSWVEGKLIDKVGQLGKKLHTGRSRNDQVATDLKLWCKETVRELLTANRLLQSALVETAQVNQDAVMPGYTHLQRAQPVTFAHWCLAYVEMLARDESRLQDTLKRLDVSPLGCGALAGTAYEIDREQLAGWLGFASATRNSLDSVSDRDHVLELLSDAAIGMVHLSRFAEDLIFFNSGEAGFVELSDRVTSGSSLMPQKKNPDALELIRGKCGRVQGALTGMMMTLKGLPLAYNKDMQEDKEGLFDALDTWLDCLHMAALVLDGIQVKRPRCQEAAQQGYANATELADYLVAKGVPFREAHHIVGEAVVEAIRQGKPLEALPLADLQKFSRVIGDDVYPILSLQSCLDKRAAKGGVSPQQVAQAIDDARARLAL.

Belongs to the lyase 1 family. Argininosuccinate lyase subfamily.

The protein resides in the cytoplasm. It carries out the reaction 2-(N(omega)-L-arginino)succinate = fumarate + L-arginine. It functions in the pathway amino-acid biosynthesis; L-arginine biosynthesis; L-arginine from L-ornithine and carbamoyl phosphate: step 3/3. This is Argininosuccinate lyase from Salmonella paratyphi A (strain ATCC 9150 / SARB42).